A 339-amino-acid chain; its full sequence is DNA-directed RNA polymerase subunit alpha (339 aa).

The tract at residues 1 to 235 (MVLQKNWQSL…DQLQLFINFD (235 aa)) is alpha N-terminal domain (alpha-NTD). Residues 251–339 (FNRNLLRKVD…DLAKRLDEPF (89 aa)) form an alpha C-terminal domain (alpha-CTD) region.

This sequence belongs to the RNA polymerase alpha chain family. In terms of assembly, homodimer. The RNAP catalytic core consists of 2 alpha, 1 beta, 1 beta' and 1 omega subunit. When a sigma factor is associated with the core the holoenzyme is formed, which can initiate transcription.

It catalyses the reaction RNA(n) + a ribonucleoside 5'-triphosphate = RNA(n+1) + diphosphate. In terms of biological role, DNA-dependent RNA polymerase catalyzes the transcription of DNA into RNA using the four ribonucleoside triphosphates as substrates. In Gluconacetobacter diazotrophicus (strain ATCC 49037 / DSM 5601 / CCUG 37298 / CIP 103539 / LMG 7603 / PAl5), this protein is DNA-directed RNA polymerase subunit alpha.